The primary structure comprises 317 residues: Acetyl-coenzyme A carboxylase carboxyl transferase subunit alpha (317 aa).

Positions 40-294 (RLQKKSEELT…KQQILADLQD (255 aa)) constitute a CoA carboxyltransferase C-terminal domain.

This sequence belongs to the AccA family. Acetyl-CoA carboxylase is a heterohexamer composed of biotin carboxyl carrier protein (AccB), biotin carboxylase (AccC) and two subunits each of ACCase subunit alpha (AccA) and ACCase subunit beta (AccD).

The protein localises to the cytoplasm. It catalyses the reaction N(6)-carboxybiotinyl-L-lysyl-[protein] + acetyl-CoA = N(6)-biotinyl-L-lysyl-[protein] + malonyl-CoA. It participates in lipid metabolism; malonyl-CoA biosynthesis; malonyl-CoA from acetyl-CoA: step 1/1. In terms of biological role, component of the acetyl coenzyme A carboxylase (ACC) complex. First, biotin carboxylase catalyzes the carboxylation of biotin on its carrier protein (BCCP) and then the CO(2) group is transferred by the carboxyltransferase to acetyl-CoA to form malonyl-CoA. The polypeptide is Acetyl-coenzyme A carboxylase carboxyl transferase subunit alpha (Actinobacillus pleuropneumoniae serotype 5b (strain L20)).